Here is a 61-residue protein sequence, read N- to C-terminus: uncharacterized protein (61 aa).

This is an uncharacterized protein from Dictyostelium discoideum (Social amoeba).